Here is a 237-residue protein sequence, read N- to C-terminus: 7-carboxy-7-deazaguanine synthase (237 aa).

Substrate contacts are provided by residues 15–17 (LSG) and Arg30. The Radical SAM core domain occupies 21-233 (STGIPTIFVR…IQTHKYIWGD (213 aa)). 3 residues coordinate [4Fe-4S] cluster: Cys34, Cys38, and Cys48. Thr50 contributes to the Mg(2+) binding site. Thr84 contacts substrate. Gly86 lines the S-adenosyl-L-methionine pocket.

Belongs to the radical SAM superfamily. 7-carboxy-7-deazaguanine synthase family. In terms of assembly, homodimer. [4Fe-4S] cluster is required as a cofactor. It depends on S-adenosyl-L-methionine as a cofactor. Mg(2+) serves as cofactor.

It carries out the reaction 6-carboxy-5,6,7,8-tetrahydropterin + H(+) = 7-carboxy-7-deazaguanine + NH4(+). Its pathway is purine metabolism; 7-cyano-7-deazaguanine biosynthesis. Catalyzes the complex heterocyclic radical-mediated conversion of 6-carboxy-5,6,7,8-tetrahydropterin (CPH4) to 7-carboxy-7-deazaguanine (CDG), a step common to the biosynthetic pathways of all 7-deazapurine-containing compounds. The sequence is that of 7-carboxy-7-deazaguanine synthase from Leptospira interrogans serogroup Icterohaemorrhagiae serovar Lai (strain 56601).